We begin with the raw amino-acid sequence, 371 residues long: Queuine tRNA-ribosyltransferase (371 aa).

Catalysis depends on Asp-92, which acts as the Proton acceptor. Residues Asp-92–Phe-96, Asp-147, Gln-190, and Gly-217 contribute to the substrate site. Residues Gly-248 to Asp-254 are RNA binding. Asp-267 acts as the Nucleophile in catalysis. Residues Thr-272–Arg-276 form an RNA binding; important for wobble base 34 recognition region.

It belongs to the queuine tRNA-ribosyltransferase family. As to quaternary structure, homodimer. Within each dimer, one monomer is responsible for RNA recognition and catalysis, while the other monomer binds to the replacement base PreQ1.

The enzyme catalyses 7-aminomethyl-7-carbaguanine + guanosine(34) in tRNA = 7-aminomethyl-7-carbaguanosine(34) in tRNA + guanine. The protein operates within tRNA modification; tRNA-queuosine biosynthesis. Catalyzes the base-exchange of a guanine (G) residue with the queuine precursor 7-aminomethyl-7-deazaguanine (PreQ1) at position 34 (anticodon wobble position) in tRNAs with GU(N) anticodons (tRNA-Asp, -Asn, -His and -Tyr). Catalysis occurs through a double-displacement mechanism. The nucleophile active site attacks the C1' of nucleotide 34 to detach the guanine base from the RNA, forming a covalent enzyme-RNA intermediate. The proton acceptor active site deprotonates the incoming PreQ1, allowing a nucleophilic attack on the C1' of the ribose to form the product. After dissociation, two additional enzymatic reactions on the tRNA convert PreQ1 to queuine (Q), resulting in the hypermodified nucleoside queuosine (7-(((4,5-cis-dihydroxy-2-cyclopenten-1-yl)amino)methyl)-7-deazaguanosine). The sequence is that of Queuine tRNA-ribosyltransferase from Caulobacter vibrioides (strain ATCC 19089 / CIP 103742 / CB 15) (Caulobacter crescentus).